A 487-amino-acid polypeptide reads, in one-letter code: Adenosylhomocysteinase (487 aa).

Substrate-binding residues include Thr76, Asp151, and Glu212. 213-215 (TTT) is an NAD(+) binding site. Lys242 and Asp246 together coordinate substrate. Residues Asn247, 276–281 (GYGDVG), Glu299, Asn334, 355–357 (IGH), and Asn403 contribute to the NAD(+) site.

The protein belongs to the adenosylhomocysteinase family. Requires NAD(+) as cofactor.

It localises to the cytoplasm. The catalysed reaction is S-adenosyl-L-homocysteine + H2O = L-homocysteine + adenosine. It participates in amino-acid biosynthesis; L-homocysteine biosynthesis; L-homocysteine from S-adenosyl-L-homocysteine: step 1/1. Functionally, may play a key role in the regulation of the intracellular concentration of adenosylhomocysteine. The sequence is that of Adenosylhomocysteinase from Bacteroides fragilis (strain YCH46).